A 199-amino-acid chain; its full sequence is MTLVIGLTGGIASGKSTVSSMLLEKNFPVIDADLIAREVVEPGEKAYDQILEAFGKEIIQNDQKIDRPKLGSIIFTDEDKRKQLNAIVHPAVRNRMLTKRDDYINNDVPCVILDIPLLFESNLGYLVDKTLVVYVDEDIQLTRLMKRNEYSEKEALDRIKAQMSLKEKADLADIVIDNNQSVEETKLQLDNVLQKWNIS.

Residues 4–199 (VIGLTGGIAS…DNVLQKWNIS (196 aa)) enclose the DPCK domain. 12–17 (ASGKST) contacts ATP.

The protein belongs to the CoaE family.

Its subcellular location is the cytoplasm. The catalysed reaction is 3'-dephospho-CoA + ATP = ADP + CoA + H(+). The protein operates within cofactor biosynthesis; coenzyme A biosynthesis; CoA from (R)-pantothenate: step 5/5. Catalyzes the phosphorylation of the 3'-hydroxyl group of dephosphocoenzyme A to form coenzyme A. The protein is Dephospho-CoA kinase of Oceanobacillus iheyensis (strain DSM 14371 / CIP 107618 / JCM 11309 / KCTC 3954 / HTE831).